Reading from the N-terminus, the 110-residue chain is Large ribosomal subunit protein uL22 (110 aa).

Belongs to the universal ribosomal protein uL22 family. As to quaternary structure, part of the 50S ribosomal subunit.

Functionally, this protein binds specifically to 23S rRNA; its binding is stimulated by other ribosomal proteins, e.g. L4, L17, and L20. It is important during the early stages of 50S assembly. It makes multiple contacts with different domains of the 23S rRNA in the assembled 50S subunit and ribosome. In terms of biological role, the globular domain of the protein is located near the polypeptide exit tunnel on the outside of the subunit, while an extended beta-hairpin is found that lines the wall of the exit tunnel in the center of the 70S ribosome. The chain is Large ribosomal subunit protein uL22 from Yersinia pseudotuberculosis serotype O:1b (strain IP 31758).